Reading from the N-terminus, the 137-residue chain is Peptide methionine sulfoxide reductase MsrB (137 aa).

The disordered stretch occupies residues Met-1–Thr-33. The MsrB domain maps to Asp-13 to Ala-135. Zn(2+)-binding residues include Cys-52, Cys-55, Cys-101, and Cys-104. The active-site Nucleophile is the Cys-124.

This sequence belongs to the MsrB Met sulfoxide reductase family. It depends on Zn(2+) as a cofactor.

It carries out the reaction L-methionyl-[protein] + [thioredoxin]-disulfide + H2O = L-methionyl-(R)-S-oxide-[protein] + [thioredoxin]-dithiol. The polypeptide is Peptide methionine sulfoxide reductase MsrB (Thioalkalivibrio sulfidiphilus (strain HL-EbGR7)).